The sequence spans 120 residues: MFLLYEYDIFWTFLIISSLIPILAFFISGILAPISKGPEKLSSYESGIEPIGDAWLQFRIRYYMFALVFVVFDVETVFLYPWAMSFDILGVSVFIEALIFVLILIVGLVYAWRKGALEWS.

3 helical membrane passes run 14–34 (LIIS…LAPI), 64–84 (MFAL…PWAM), and 88–108 (ILGV…IVGL).

The protein belongs to the complex I subunit 3 family. NDH is composed of at least 16 different subunits, 5 of which are encoded in the nucleus.

The protein resides in the plastid. It localises to the chloroplast thylakoid membrane. It carries out the reaction a plastoquinone + NADH + (n+1) H(+)(in) = a plastoquinol + NAD(+) + n H(+)(out). It catalyses the reaction a plastoquinone + NADPH + (n+1) H(+)(in) = a plastoquinol + NADP(+) + n H(+)(out). NDH shuttles electrons from NAD(P)H:plastoquinone, via FMN and iron-sulfur (Fe-S) centers, to quinones in the photosynthetic chain and possibly in a chloroplast respiratory chain. The immediate electron acceptor for the enzyme in this species is believed to be plastoquinone. Couples the redox reaction to proton translocation, and thus conserves the redox energy in a proton gradient. The protein is NAD(P)H-quinone oxidoreductase subunit 3, chloroplastic of Coffea arabica (Arabian coffee).